A 161-amino-acid chain; its full sequence is Nucleotide-binding protein SO_3815 (161 aa).

Belongs to the YajQ family.

Its function is as follows. Nucleotide-binding protein. The protein is Nucleotide-binding protein SO_3815 of Shewanella oneidensis (strain ATCC 700550 / JCM 31522 / CIP 106686 / LMG 19005 / NCIMB 14063 / MR-1).